The sequence spans 602 residues: UvrABC system protein C (602 aa).

The region spanning 15–92 is the GIY-YIG domain; that stretch reads DLPGSYQMKD…IQKYQPYYNI (78 aa). One can recognise a UVR domain in the interval 197-232; it reads GKAKASLTAKMERAAKNLQFERAAEIRDQLHYIEQT.

The protein belongs to the UvrC family. As to quaternary structure, interacts with UvrB in an incision complex.

It localises to the cytoplasm. Functionally, the UvrABC repair system catalyzes the recognition and processing of DNA lesions. UvrC both incises the 5' and 3' sides of the lesion. The N-terminal half is responsible for the 3' incision and the C-terminal half is responsible for the 5' incision. This is UvrABC system protein C from Lacticaseibacillus paracasei (strain ATCC 334 / BCRC 17002 / CCUG 31169 / CIP 107868 / KCTC 3260 / NRRL B-441) (Lactobacillus paracasei).